Consider the following 582-residue polypeptide: Aspartate--tRNA ligase (582 aa).

Position 174 (glutamate 174) interacts with L-aspartate. The aspartate stretch occupies residues glutamine 198 to lysine 201. Arginine 220 lines the L-aspartate pocket. Residues arginine 220–glutamate 222 and glutamine 229 each bind ATP. Residue histidine 443 coordinates L-aspartate. Glutamate 477 contacts ATP. Residue arginine 484 coordinates L-aspartate. Glycine 529–arginine 532 lines the ATP pocket.

This sequence belongs to the class-II aminoacyl-tRNA synthetase family. Type 1 subfamily. As to quaternary structure, homodimer.

Its subcellular location is the cytoplasm. It carries out the reaction tRNA(Asp) + L-aspartate + ATP = L-aspartyl-tRNA(Asp) + AMP + diphosphate. Its function is as follows. Catalyzes the attachment of L-aspartate to tRNA(Asp) in a two-step reaction: L-aspartate is first activated by ATP to form Asp-AMP and then transferred to the acceptor end of tRNA(Asp). This chain is Aspartate--tRNA ligase, found in Streptococcus pyogenes serotype M28 (strain MGAS6180).